Here is a 365-residue protein sequence, read N- to C-terminus: Aminomethyltransferase (365 aa).

Belongs to the GcvT family. As to quaternary structure, the glycine cleavage system is composed of four proteins: P, T, L and H.

It catalyses the reaction N(6)-[(R)-S(8)-aminomethyldihydrolipoyl]-L-lysyl-[protein] + (6S)-5,6,7,8-tetrahydrofolate = N(6)-[(R)-dihydrolipoyl]-L-lysyl-[protein] + (6R)-5,10-methylene-5,6,7,8-tetrahydrofolate + NH4(+). The glycine cleavage system catalyzes the degradation of glycine. This is Aminomethyltransferase from Bacillus pumilus (strain SAFR-032).